The following is an 881-amino-acid chain: Lon protease (881 aa).

The segment covering 1 to 24 (MAKNTDIEHDAHEPAGHGDVRESA) has biased composition (basic and acidic residues). The segment at 1 to 77 (MAKNTDIEHD…RAGEAEKGVP (77 aa)) is disordered. Residues 49 to 59 (QTDTESAQGAA) are compositionally biased toward polar residues. Positions 65 to 77 (EVQRAGEAEKGVP) are enriched in basic and acidic residues. The 194-residue stretch at 94–287 (VHLIPLTGRP…EVFVYIKKEK (194 aa)) folds into the Lon N-terminal domain. 440 to 447 (GPPGVGKT) serves as a coordination point for ATP. The Lon proteolytic domain occupies 679-861 (ANKVGTAVGL…EEVLSLAFPK (183 aa)). Active-site residues include serine 767 and lysine 810.

It belongs to the peptidase S16 family. Homohexamer. Organized in a ring with a central cavity.

The protein localises to the cytoplasm. It catalyses the reaction Hydrolysis of proteins in presence of ATP.. In terms of biological role, ATP-dependent serine protease that mediates the selective degradation of mutant and abnormal proteins as well as certain short-lived regulatory proteins. Required for cellular homeostasis and for survival from DNA damage and developmental changes induced by stress. Degrades polypeptides processively to yield small peptide fragments that are 5 to 10 amino acids long. Binds to DNA in a double-stranded, site-specific manner. The chain is Lon protease from Treponema pallidum (strain Nichols).